A 143-amino-acid polypeptide reads, in one-letter code: Large ribosomal subunit protein uL13 (143 aa).

It belongs to the universal ribosomal protein uL13 family. In terms of assembly, part of the 50S ribosomal subunit.

In terms of biological role, this protein is one of the early assembly proteins of the 50S ribosomal subunit, although it is not seen to bind rRNA by itself. It is important during the early stages of 50S assembly. In Prochlorococcus marinus (strain MIT 9312), this protein is Large ribosomal subunit protein uL13.